A 51-amino-acid chain; its full sequence is Small polypeptide DEVIL 1 (51 aa).

Residues 1 to 25 are disordered; the sequence is MEMKRVMMSSAERSKEKKRSISRRL. Residues 16–25 are compositionally biased toward basic residues; it reads EKKRSISRRL. The tract at residues 20 to 51 is required for DVL/RTFL small polypeptide activity; it reads SISRRLGKYMKEQKGRIYIIRRCMVMLLCSHD. Residues 28–44 traverse the membrane as a helical segment; the sequence is YMKEQKGRIYIIRRCMV.

The protein belongs to the DVL/RTFL small polypeptides family. In terms of tissue distribution, mostly expressed in leaves and, to a lower extent, in roots and stems.

It is found in the cell membrane. Its function is as follows. Small polypeptide acting as a regulatory molecule which coordinates cellular responses required for differentiation, growth and development, including leaves shape, pedicule elongation, inflorescence organization and fruit maturation, probably by restricting polar cell proliferation in lateral organs and coordinating socket cell recruitment and differentiation at trichome sites. The sequence is that of Small polypeptide DEVIL 1 from Arabidopsis thaliana (Mouse-ear cress).